The primary structure comprises 187 residues: Protein GrpE (187 aa).

This sequence belongs to the GrpE family. Homodimer.

It localises to the cytoplasm. Functionally, participates actively in the response to hyperosmotic and heat shock by preventing the aggregation of stress-denatured proteins, in association with DnaK and GrpE. It is the nucleotide exchange factor for DnaK and may function as a thermosensor. Unfolded proteins bind initially to DnaJ; upon interaction with the DnaJ-bound protein, DnaK hydrolyzes its bound ATP, resulting in the formation of a stable complex. GrpE releases ADP from DnaK; ATP binding to DnaK triggers the release of the substrate protein, thus completing the reaction cycle. Several rounds of ATP-dependent interactions between DnaJ, DnaK and GrpE are required for fully efficient folding. This chain is Protein GrpE, found in Albidiferax ferrireducens (strain ATCC BAA-621 / DSM 15236 / T118) (Rhodoferax ferrireducens).